The primary structure comprises 282 residues: Elongation factor Ts (282 aa).

The tract at residues 80–83 (TDFV) is involved in Mg(2+) ion dislocation from EF-Tu.

It belongs to the EF-Ts family.

The protein resides in the cytoplasm. Functionally, associates with the EF-Tu.GDP complex and induces the exchange of GDP to GTP. It remains bound to the aminoacyl-tRNA.EF-Tu.GTP complex up to the GTP hydrolysis stage on the ribosome. The protein is Elongation factor Ts of Chlamydia caviae (strain ATCC VR-813 / DSM 19441 / 03DC25 / GPIC) (Chlamydophila caviae).